A 637-amino-acid polypeptide reads, in one-letter code: DNA gyrase subunit B (637 aa).

The region spanning 420–534 is the Toprim domain; it reads CEIYIVEGDS…EGHVFIAQPP (115 aa). The Mg(2+) site is built by glutamate 426, aspartate 499, and aspartate 501.

This sequence belongs to the type II topoisomerase GyrB family. Heterotetramer, composed of two GyrA and two GyrB chains. In the heterotetramer, GyrA contains the active site tyrosine that forms a transient covalent intermediate with DNA, while GyrB binds cofactors and catalyzes ATP hydrolysis. Requires Mg(2+) as cofactor. Mn(2+) is required as a cofactor. The cofactor is Ca(2+).

It localises to the cytoplasm. The catalysed reaction is ATP-dependent breakage, passage and rejoining of double-stranded DNA.. Its function is as follows. A type II topoisomerase that negatively supercoils closed circular double-stranded (ds) DNA in an ATP-dependent manner to modulate DNA topology and maintain chromosomes in an underwound state. Negative supercoiling favors strand separation, and DNA replication, transcription, recombination and repair, all of which involve strand separation. Also able to catalyze the interconversion of other topological isomers of dsDNA rings, including catenanes and knotted rings. Type II topoisomerases break and join 2 DNA strands simultaneously in an ATP-dependent manner. The chain is DNA gyrase subunit B from Clostridium acetobutylicum (strain ATCC 824 / DSM 792 / JCM 1419 / IAM 19013 / LMG 5710 / NBRC 13948 / NRRL B-527 / VKM B-1787 / 2291 / W).